The primary structure comprises 250 residues: Triosephosphate isomerase (250 aa).

Substrate is bound at residue 9–11 (NWK). His94 (electrophile) is an active-site residue. The active-site Proton acceptor is the Glu166. Substrate is bound by residues Gly172, Ser212, and 233–234 (GG).

The protein belongs to the triosephosphate isomerase family. Homodimer.

The protein resides in the cytoplasm. The catalysed reaction is D-glyceraldehyde 3-phosphate = dihydroxyacetone phosphate. Its pathway is carbohydrate biosynthesis; gluconeogenesis. It functions in the pathway carbohydrate degradation; glycolysis; D-glyceraldehyde 3-phosphate from glycerone phosphate: step 1/1. Its function is as follows. Involved in the gluconeogenesis. Catalyzes stereospecifically the conversion of dihydroxyacetone phosphate (DHAP) to D-glyceraldehyde-3-phosphate (G3P). The polypeptide is Triosephosphate isomerase (Clostridium novyi (strain NT)).